A 784-amino-acid chain; its full sequence is N-alpha-acetyltransferase 35, NatC auxiliary subunit homolog (784 aa).

Disordered stretches follow at residues 1–23, 320–353, and 606–630; these read MYPS…VAEP, NTLD…PPAF, and SKTQ…NKKT. Residues 617-630 show a composition bias toward basic residues; sequence KNRKAAKPKKNKKT.

It belongs to the MAK10 family. In terms of assembly, component of the N-terminal acetyltransferase C (NatC) complex, which is composed of Naa35, Sbat/Naa38 and Naa30A.

The protein localises to the cytoplasm. Auxillary component of the N-terminal acetyltransferase C (NatC) complex which catalyzes acetylation of N-terminal methionine residues. The protein is N-alpha-acetyltransferase 35, NatC auxiliary subunit homolog of Drosophila melanogaster (Fruit fly).